The following is a 205-amino-acid chain: MNDNREQLTQQIIDAGRFLYGRGWSPATSSNYSARLDEQRALLTVSGKHKGQLGFDDVLATDLAGNSLEPGKKPSAETLLHTQLYAWNPAIGAVLHTHSVNATVLSRLVRGDRLVLQDYELQKAFAGVTTHEGQVEVPIFDNDQDIARLASRVQPWLEAHPHCPGYLIRGHGLYTWGARMSDALRQVEAFEFLFECELKVLSLSR.

Positions 96 and 98 each coordinate Zn(2+).

Belongs to the aldolase class II family. MtnB subfamily. Requires Zn(2+) as cofactor.

It catalyses the reaction 5-(methylsulfanyl)-D-ribulose 1-phosphate = 5-methylsulfanyl-2,3-dioxopentyl phosphate + H2O. Its pathway is amino-acid biosynthesis; L-methionine biosynthesis via salvage pathway; L-methionine from S-methyl-5-thio-alpha-D-ribose 1-phosphate: step 2/6. In terms of biological role, catalyzes the dehydration of methylthioribulose-1-phosphate (MTRu-1-P) into 2,3-diketo-5-methylthiopentyl-1-phosphate (DK-MTP-1-P). The sequence is that of Methylthioribulose-1-phosphate dehydratase from Pseudomonas aeruginosa (strain ATCC 15692 / DSM 22644 / CIP 104116 / JCM 14847 / LMG 12228 / 1C / PRS 101 / PAO1).